A 119-amino-acid chain; its full sequence is Large ribosomal subunit protein uL24 (119 aa).

The protein belongs to the universal ribosomal protein uL24 family. As to quaternary structure, part of the 50S ribosomal subunit.

One of two assembly initiator proteins, it binds directly to the 5'-end of the 23S rRNA, where it nucleates assembly of the 50S subunit. In terms of biological role, located at the polypeptide exit tunnel on the outside of the subunit. This Methanococcus maripaludis (strain DSM 14266 / JCM 13030 / NBRC 101832 / S2 / LL) protein is Large ribosomal subunit protein uL24.